A 31-amino-acid polypeptide reads, in one-letter code: Conotoxin pc6b (31 aa).

Cystine bridges form between cysteine 2–cysteine 20, cysteine 9–cysteine 25, and cysteine 19–cysteine 29.

This sequence belongs to the conotoxin O1 superfamily. As to expression, expressed by the venom duct.

The protein localises to the secreted. In Conus pictus (Cone snail), this protein is Conotoxin pc6b.